The following is an 87-amino-acid chain: Defensin-like protein 175 (87 aa).

The first 23 residues, 1–23, serve as a signal peptide directing secretion; it reads MAKATSSLVVPIIFLVIFALVEQ. Disulfide bonds link Cys27/Cys66, Cys36/Cys55, Cys39/Cys60, and Cys43/Cys62.

Belongs to the DEFL family.

It is found in the secreted. The sequence is that of Defensin-like protein 175 from Arabidopsis thaliana (Mouse-ear cress).